Reading from the N-terminus, the 460-residue chain is Antizyme inhibitor 2 (460 aa).

Residues 117–140 (QIAQIKYAAKHGIQLLSFDNEMEL) form a necessary for polyamine uptake stimulation region.

The protein belongs to the Orn/Lys/Arg decarboxylase class-II family. ODC antizyme inhibitor subfamily. In terms of assembly, monomer. Interacts with OAZ1, OAZ2 and OAZ3; this interaction disrupts the interaction between the antizyme and ODC1. Does not form a heterodimer with ODC1. Post-translationally, ubiquitinated, leading to its proteasomal degradation; a process that is reduced in presence of antizymes. May also be degraded through the lysosomal degradative pathway in a proteasomal-independent manner. In terms of tissue distribution, expressed in the neocortex, thalamus, hippocampus, cerebellum, medulla oblongata, gray and white matter. Expressed in neurons, oligodendrocytes, basket, Purkinje and pyramidal cells. Expressed in spermatocytes and Leydig cells of the testis. Expressed in luteal theca cells lining corpus luteum cysts and in hilus cells of the ovary. Expressed in primary and neoplastic mast cells (MC) (at protein level). Highly expressed in brain. Also expressed in testis.

Its subcellular location is the nucleus. The protein resides in the cytoplasm. It localises to the perinuclear region. It is found in the membrane. The protein localises to the cytoplasmic vesicle. Its subcellular location is the endoplasmic reticulum-Golgi intermediate compartment. The protein resides in the golgi apparatus. It localises to the cis-Golgi network. It is found in the trans-Golgi network. The protein localises to the cytoplasmic granule. Its subcellular location is the cell projection. The protein resides in the axon. It localises to the dendrite. It is found in the perikaryon. Antizyme inhibitor (AZI) protein that positively regulates ornithine decarboxylase (ODC) activity and polyamine uptake. AZI is an enzymatically inactive ODC homolog that counteracts the negative effect of ODC antizymes (AZs) OAZ1, OAZ2 and OAZ3 on ODC activity by competing with ODC for antizyme-binding. Inhibits antizyme-dependent ODC degradation and releases ODC monomers from their inactive complex with antizymes, leading to formation of the catalytically active ODC homodimer and restoring polyamine production. Participates in the morphological integrity of the trans-Golgi network (TGN) and functions as a regulator of intracellular secretory vesicle trafficking. The polypeptide is Antizyme inhibitor 2 (AZIN2) (Homo sapiens (Human)).